Here is a 363-residue protein sequence, read N- to C-terminus: S-adenosylmethionine:tRNA ribosyltransferase-isomerase (363 aa).

Belongs to the QueA family. In terms of assembly, monomer.

The protein localises to the cytoplasm. The enzyme catalyses 7-aminomethyl-7-carbaguanosine(34) in tRNA + S-adenosyl-L-methionine = epoxyqueuosine(34) in tRNA + adenine + L-methionine + 2 H(+). It functions in the pathway tRNA modification; tRNA-queuosine biosynthesis. In terms of biological role, transfers and isomerizes the ribose moiety from AdoMet to the 7-aminomethyl group of 7-deazaguanine (preQ1-tRNA) to give epoxyqueuosine (oQ-tRNA). The sequence is that of S-adenosylmethionine:tRNA ribosyltransferase-isomerase from Brucella melitensis biotype 2 (strain ATCC 23457).